The primary structure comprises 252 residues: MERLLIVNADDFGLSKGQNYGIVEACRNGVVTSTTALVNGDAIDHAAQLCRDVPKLAVGMHFVLTLGKPLTAMPGLTREGLLGKWIWQMAEEETLPLDEISHELECQYQRFIDLFGREPTHLDSHHHVHMFPQIFPIVAMFAAERGVALRIDRQSVLNADDLPVALRSSQGFSSEFYGDAISEALFLQVLDASADRGEKSLEVMCHPAFIDNIIRQSAYCYPRLTELDVLTSASLKYAIAERGYRLGSFLDV.

Residues His61 and His125 each contribute to the Mg(2+) site.

It belongs to the YdjC deacetylase family. ChbG subfamily. As to quaternary structure, homodimer. Mg(2+) is required as a cofactor.

The protein localises to the cytoplasm. The catalysed reaction is N,N'-diacetylchitobiose + H2O = N-acetyl-beta-D-glucosaminyl-(1-&gt;4)-D-glucosamine + acetate. It carries out the reaction diacetylchitobiose-6'-phosphate + H2O = N'-monoacetylchitobiose-6'-phosphate + acetate. It functions in the pathway glycan degradation; chitin degradation. In terms of biological role, involved in the degradation of chitin. ChbG is essential for growth on the acetylated chitooligosaccharides chitobiose and chitotriose but is dispensable for growth on cellobiose and chitosan dimer, the deacetylated form of chitobiose. Deacetylation of chitobiose-6-P and chitotriose-6-P is necessary for both the activation of the chb promoter by the regulatory protein ChbR and the hydrolysis of phosphorylated beta-glucosides by the phospho-beta-glucosidase ChbF. Catalyzes the removal of only one acetyl group from chitobiose-6-P to yield monoacetylchitobiose-6-P, the inducer of ChbR and the substrate of ChbF. This chain is Chitooligosaccharide deacetylase, found in Citrobacter koseri (strain ATCC BAA-895 / CDC 4225-83 / SGSC4696).